Here is a 565-residue protein sequence, read N- to C-terminus: NAD-dependent malic enzyme (565 aa).

The active-site Proton donor is Tyr-104. NAD(+) is bound at residue Arg-157. Catalysis depends on Lys-175, which acts as the Proton acceptor. A divalent metal cation is bound by residues Glu-246, Asp-247, and Asp-270. Asp-270 and Asn-418 together coordinate NAD(+).

The protein belongs to the malic enzymes family. In terms of assembly, homotetramer. Mg(2+) serves as cofactor. The cofactor is Mn(2+).

It catalyses the reaction (S)-malate + NAD(+) = pyruvate + CO2 + NADH. The enzyme catalyses oxaloacetate + H(+) = pyruvate + CO2. The chain is NAD-dependent malic enzyme from Salmonella choleraesuis (strain SC-B67).